The chain runs to 318 residues: Type II restriction enzyme HaeIII (318 aa).

The enzyme catalyses Endonucleolytic cleavage of DNA to give specific double-stranded fragments with terminal 5'-phosphates.. Its function is as follows. A P subtype restriction enzyme that recognizes the double-stranded sequence 5'-GGCC-3' and cleaves after G-2. The polypeptide is Type II restriction enzyme HaeIII (haeIIIR) (Haemophilus aegyptius).